We begin with the raw amino-acid sequence, 336 residues long: Oxaloacetate decarboxylase (336 aa).

Residues 10-258 enclose the Pyruvate carboxyltransferase domain; the sequence is PIVLDTTVRD…LAAVDLDRIF (249 aa). D19, H197, and H199 together coordinate Mn(2+).

It belongs to the 4-hydroxy-2-oxovalerate aldolase family. As to quaternary structure, homodimer. A divalent metal cation serves as cofactor.

The enzyme catalyses oxaloacetate + H(+) = pyruvate + CO2. Activity is abolished upon incubation with Chelex and EDTA. In terms of biological role, exhibits oxaloacetate decarboxylase activity. Lacks any detectable aldolase activity with 4-hydroxy-2-oxopentanoate (HOPA), 4-hydroxy-2-oxohexanoate (HOHA) or other 4-hydroxy-2-oxoacids. The chain is Oxaloacetate decarboxylase from Mycobacterium tuberculosis (strain ATCC 25618 / H37Rv).